The following is a 636-amino-acid chain: Transcription termination factor FttA (636 aa).

A KHa region spans residues 4–72 (ELELKRIRDE…VVFRWNVDKR (69 aa)). The interval 73-140 (KDPAETKDYI…WQPKTIRTPP (68 aa)) is KHb. The segment at 181-383 (NIRMNALGGF…LLIEATYGGP (203 aa)) is metallo-beta-lactamase N-terminus. Zn(2+) is bound by residues His-242, His-244, Asp-246, His-247, His-329, and Asp-352. Residues 384–577 (QDRIPSRQES…LKVFTLEGFS (194 aa)) are beta-Casp. Residues 578-636 (GHSSRSQISQFLRRIQPRPKVVIVNHGEESKCVSLSTMIHKKLRKSTKSPKNLEVVLLK) are metallo-beta-lactamase C-terminus. His-603 lines the Zn(2+) pocket.

Belongs to the metallo-beta-lactamase superfamily. RNA-metabolizing metallo-beta-lactamase-like family. FttA subfamily. Homodimer. Interacts with RNA polymerase (RNAP), interacts with the Spt4-Spt5 complex. Zn(2+) is required as a cofactor.

Its function is as follows. Terminates transcription on the whole genome. Termination is linked to FttA-mediated RNA cleavage and does not require NTP hydrolysis. Cleaves endonucleolytically at the RNA exit channel of RNA polymerase (RNAP); the 5'-3' exonuclease activity of this protein degrades the nascent RNA released from RNAP. Functionally, terminates transcription genome-wide in M.maripaludis. Restores wild-type growth to a strain of Methanococcus maripaludis depleted for this gene at 22 degrees Celsius and prevents transcriptional read-through. Transcription termination is most effective in vivo on RNAs with more than one U4-tract in their 3'-ends. Has endonuclease activity after U-rich tracts in transcription termination sequences. This is Transcription termination factor FttA from Lokiarchaeum sp. (strain GC14_75).